The chain runs to 818 residues: Sodium/hydrogen exchanger 1 (818 aa).

At 1–98 (MLLWPGASGL…FPVLGIDYQH (98 aa)) the chain is on the extracellular side. The segment at 44–76 (STIRGSEPPRERSIGDVTTAPPELAPESRPVNH) is disordered. N-linked (GlcNAc...) asparagine glycosylation occurs at N75. Residues 99–121 (VRIPFEIALWILLACLMKIGFHV) traverse the membrane as a helical segment. At 122-130 (IPTISSIVP) the chain is on the cytoplasmic side. The helical transmembrane segment at 131–148 (ESCLLIVVGLLVGGLIKG) threads the bilayer. Over 149–158 (VGETPPILQS) the chain is Extracellular. Residues 159–176 (EVFFLFLLPPIILDAGYF) form a helical membrane-spanning segment. At 177–186 (LPLRQFTENL) the chain is on the cytoplasmic side. Residues 187–215 (GTILIFAVVGTLWNAFFLGGLMYAVCLVG) traverse the membrane as a helical segment. Residues 216 to 222 (GEQINNI) lie on the Extracellular side of the membrane. The helical transmembrane segment at 223–249 (GLLENLLFGSIISAVDPVAVLAVFEEI) threads the bilayer. Residues 250–252 (HIN) are Cytoplasmic-facing. A helical membrane pass occupies residues 253–283 (ELLHILVFGESLLNDAVTVVLYHLFEEFANY). The Extracellular segment spans residues 284-287 (DRVG). A helical transmembrane segment spans residues 288-322 (IVDIILGFLSFFVVSLGGVFVGVVYGVIAAFTSRF). The Cytoplasmic segment spans residues 323 to 328 (TSHIRV). The helical transmembrane segment at 329–341 (IEPLFVFLYSYMA) threads the bilayer. The Extracellular portion of the chain corresponds to 342-350 (YLSAELFHL). A helical transmembrane segment spans residues 351–371 (SGIMALIASGVVMRPYVEANI). Topologically, residues 372–373 (SH) are cytoplasmic. Residues 374-404 (KSHTTIKYFLKMWSSVSETLIFIFLGVSTVA) traverse the membrane as a helical segment. Residues 405–410 (GSHHWN) are Extracellular-facing. Residues 411 to 438 (WTFVISTLLFCLIARVLGVLGLTWFINK) form a helical membrane-spanning segment. The Cytoplasmic portion of the chain corresponds to 439 to 444 (FRIVKL). The helical transmembrane segment at 445-469 (TPKDQFIIAYGGLRGAIAFSLGYLL) threads the bilayer. Residues 470 to 475 (DKKHFP) lie on the Extracellular side of the membrane. A helical transmembrane segment spans residues 476–505 (MCDLFLTAIITVIFFTVFVQGMTIRPLVDL). The tract at residues 503 to 545 (VDLLAVKKKQETKRSINEEIHTQFLDHLLTGIEDICGHYGHHH) is interaction with TESC. Residues 506 to 818 (LAVKKKQETK…EGEPFIPKGQ (313 aa)) are Cytoplasmic-facing. Residues 509–516 (KKKQETKR) are PI(4,5)P2-binding region. The interaction with CHP2 stretch occupies residues 515-545 (KRSINEEIHTQFLDHLLTGIEDICGHYGHHH). A confers pH-dependent PI(4,5)P2 binding region spans residues 540–545 (HYGHHH). The segment at 552-560 (RFNKKYVKK) is PI(4,5)P2-binding region. A phosphoserine mark is found at S599 and S602. T603 carries the post-translational modification Phosphothreonine. Phosphoserine is present on residues S605 and S648. The segment at 633–818 (KILRNNLQKT…EGEPFIPKGQ (186 aa)) is interaction with TESC. An interaction with CALM1 region spans residues 633-818 (KILRNNLQKT…EGEPFIPKGQ (186 aa)). Residues 684 to 687 (LTVP) form an interaction with PPP3CA region. Phosphoserine occurs at positions 693, 697, and 703. The interval 715–720 (PVITID) is interaction with PPP3CA. Residues S723, S726, and S729 each carry the phosphoserine modification. The disordered stretch occupies residues 741 to 818 (VLGLSRDPGR…EGEPFIPKGQ (78 aa)). Phosphothreonine is present on T782. Polar residues predominate over residues 785 to 794 (PSDSPSSQRI). S788, S790, and S799 each carry phosphoserine.

The protein belongs to the monovalent cation:proton antiporter 1 (CPA1) transporter (TC 2.A.36) family. As to quaternary structure, homodimer; dimerization is crucial for its function. Oligomer. Interacts with CALM in a calcium-dependent manner. Interacts with TESC. Interacts (via the juxtamembrane region of the cytoplasmic C-terminal domain) with CHP1; the interaction occurs at the plasma membrane in a calcium-dependent manner. Interacts with CHP2; the interaction occurs in a calcium-dependent manner. Interacts with EZR; regulates the cytoskeletal interactions of SLC9A1 and promotes stress fiber formation. Ubiquitinated, leading to its degradation by the proteasome. Ubiquitination is reduced by CHP1. Post-translationally, O-glycosylated. In terms of processing, palmitoylated; may play a major role in SLC9A1 regulation. Phosphorylation at Thr-782 increases SLC9A1 activity. Specifically dephosphorylated at Thr-782 by PPP3CA that negatively regulates SLC9A1 activity. Phosphorylation at Ser-648 by AKT1 reduces SLC9A1 binding to CALM1.

Its subcellular location is the cell membrane. It is found in the basolateral cell membrane. It carries out the reaction Na(+)(in) + H(+)(out) = Na(+)(out) + H(+)(in). It catalyses the reaction Li(+)(out) + H(+)(in) = Li(+)(in) + H(+)(out). The enzyme catalyses Li(+)(in) + Na(+)(out) = Li(+)(out) + Na(+)(in). Activated at acidic pHs. Inhibited by amiloride and 5-amino-substituted derivatives. Inhibited by cariporide and eniporide. Phosphatidylinositol 4,5-bisphosphate (PI(4,5)P2) and phosphatidylinositol 3,4,5-trisphosphate (PI(3,4,5)P3) bind and differentially regulate SLC9A1 activity. Electroneutral Na(+) /H(+) antiporter that extrudes Na(+) in exchange for external protons driven by the inward sodium ion chemical gradient, protecting cells from acidification that occurs from metabolism. Exchanges intracellular H(+) ions for extracellular Na(+) in 1:1 stoichiometry. Plays a key role in maintening intracellular pH neutral and cell volume, and thus is important for cell growth, proliferation, migration and survival. In addition, can transport lithium Li(+) and also functions as a Na(+)/Li(+) antiporter. SLC9A1 also functions in membrane anchoring and organization of scaffolding complexes that coordinate signaling inputs. The sequence is that of Sodium/hydrogen exchanger 1 (SLC9A1) from Bos taurus (Bovine).